The primary structure comprises 238 residues: Hydroxyacylglutathione hydrolase (238 aa).

Residues His52, His54, Asp56, His57, His108, Asp125, and His163 each contribute to the Zn(2+) site.

The protein belongs to the metallo-beta-lactamase superfamily. Glyoxalase II family. In terms of assembly, monomer. Requires Zn(2+) as cofactor.

It catalyses the reaction an S-(2-hydroxyacyl)glutathione + H2O = a 2-hydroxy carboxylate + glutathione + H(+). It functions in the pathway secondary metabolite metabolism; methylglyoxal degradation; (R)-lactate from methylglyoxal: step 2/2. Its function is as follows. Thiolesterase that catalyzes the hydrolysis of S-D-lactoyl-glutathione to form glutathione and D-lactic acid. The polypeptide is Hydroxyacylglutathione hydrolase (Haemophilus influenzae (strain ATCC 51907 / DSM 11121 / KW20 / Rd)).